Consider the following 208-residue polypeptide: Glycerol-3-phosphate acyltransferase (208 aa).

5 consecutive transmembrane segments (helical) span residues 3 to 23 (IIIM…VIIG), 55 to 75 (IVMV…TLLF), 81 to 101 (YTLL…YIGF), 113 to 133 (ILLA…LLLV), and 155 to 175 (IFYY…LFIF).

The protein belongs to the PlsY family. Probably interacts with PlsX.

The protein resides in the cell membrane. It catalyses the reaction an acyl phosphate + sn-glycerol 3-phosphate = a 1-acyl-sn-glycero-3-phosphate + phosphate. Its pathway is lipid metabolism; phospholipid metabolism. In terms of biological role, catalyzes the transfer of an acyl group from acyl-phosphate (acyl-PO(4)) to glycerol-3-phosphate (G3P) to form lysophosphatidic acid (LPA). This enzyme utilizes acyl-phosphate as fatty acyl donor, but not acyl-CoA or acyl-ACP. This Lactiplantibacillus plantarum (strain ATCC BAA-793 / NCIMB 8826 / WCFS1) (Lactobacillus plantarum) protein is Glycerol-3-phosphate acyltransferase.